We begin with the raw amino-acid sequence, 459 residues long: Sulfite oxidase (459 aa).

Residues 4–83 form the Cytochrome b5 heme-binding domain; it reads YPRYTREEVG…LQQYKVGELS (80 aa). Heme b-binding residues include His40, His65, and His69. The tract at residues 83–115 is disordered; sequence SPDEAPAAPDAQDPFAGDPPRHPGLRVNSQKPF. Residues 85–100 are compositionally biased toward low complexity; that stretch reads DEAPAAPDAQDPFAGD. Residues 86–95 are hinge; the sequence is EAPAAPDAQD. Positions 96–323 are moco domain; it reads PFAGDPPRHP…PSRWQQNDYK (228 aa). Mo-molybdopterin contacts are provided by residues 136 to 140, Cys185, Asp244, His283, Arg288, and 299 to 301; these read FTRNH and SVK. A homodimerization region spans residues 324–459; it reads GFSPCVDWDT…RGVLSTAWHR (136 aa).

As to quaternary structure, homodimer. The cofactor is heme b. Mo-molybdopterin serves as cofactor.

Its subcellular location is the mitochondrion intermembrane space. It catalyses the reaction sulfite + O2 + H2O = sulfate + H2O2. Its pathway is energy metabolism; sulfur metabolism. Its function is as follows. Catalyzes the oxidation of sulfite to sulfate, the terminal reaction in the oxidative degradation of sulfur-containing amino acids. This is Sulfite oxidase (SUOX) from Gallus gallus (Chicken).